The following is a 248-amino-acid chain: UPF0273 protein APE_1505.1 (248 aa).

The KaiC domain occupies 3 to 247 (DRVKTGIPGM…VVRIGRRVSI (245 aa)). Residue 30-37 (GGPGTGKS) participates in ATP binding.

Belongs to the UPF0273 family.

The chain is UPF0273 protein APE_1505.1 from Aeropyrum pernix (strain ATCC 700893 / DSM 11879 / JCM 9820 / NBRC 100138 / K1).